The sequence spans 51 residues: Large ribosomal subunit protein bL33 (51 aa).

It belongs to the bacterial ribosomal protein bL33 family.

In Hahella chejuensis (strain KCTC 2396), this protein is Large ribosomal subunit protein bL33.